We begin with the raw amino-acid sequence, 368 residues long: Hydrophobic dipeptide epimerase (368 aa).

Residues threonine 143 and 168 to 170 (KIK) contribute to the substrate site. Residues aspartate 197, glutamate 225, and aspartate 253 each coordinate Mg(2+). Substrate contacts are provided by residues lysine 277 and 329–331 (DMD).

Belongs to the mandelate racemase/muconate lactonizing enzyme family. Mg(2+) is required as a cofactor.

In terms of biological role, catalyzes the epimerization of various hydrophobic dipeptides, such as L-Ala-L-Phe. Has epimerase activity with L-Ala-L-Thr, L-Ala-L-Met, L-Ala-L-Tyr, as well as L-Phe-L-Met, L-Phe-L-Ser and L-Phe-L-Thr (in vitro). This is Hydrophobic dipeptide epimerase from Citrifermentans bemidjiense (strain ATCC BAA-1014 / DSM 16622 / JCM 12645 / Bem) (Geobacter bemidjiensis).